A 395-amino-acid chain; its full sequence is 8-amino-7-oxononanoate synthase/2-amino-3-ketobutyrate coenzyme A ligase (395 aa).

110-111 serves as a coordination point for pyridoxal 5'-phosphate; it reads GF. Histidine 135 serves as a coordination point for substrate. Residues serine 182, 207-210, and 239-242 contribute to the pyridoxal 5'-phosphate site; these read DDAH and TLSK. Position 242 is an N6-(pyridoxal phosphate)lysine (lysine 242). Residue threonine 356 participates in substrate binding.

Belongs to the class-II pyridoxal-phosphate-dependent aminotransferase family. As to quaternary structure, homodimer. It depends on pyridoxal 5'-phosphate as a cofactor.

It catalyses the reaction 6-carboxyhexanoyl-[ACP] + L-alanine + H(+) = (8S)-8-amino-7-oxononanoate + holo-[ACP] + CO2. The catalysed reaction is glycine + acetyl-CoA = (2S)-2-amino-3-oxobutanoate + CoA. The protein operates within cofactor biosynthesis; biotin biosynthesis. In terms of biological role, catalyzes the decarboxylative condensation of pimeloyl-[acyl-carrier protein] and L-alanine to produce 8-amino-7-oxononanoate (AON), [acyl-carrier protein], and carbon dioxide. Can also use pimeloyl-CoA instead of pimeloyl-ACP as substrate. It also converts 2-amino-3-ketobutyrate and CoA to glycine and acetyl-CoA. Activity is also observed with the following combinations of substrates: acetyl-CoA and either L-alanine or L-serine, pimeloyl-CoA and either glycine or L-serine, and palmitoyl-CoA with L-alanine. The sequence is that of 8-amino-7-oxononanoate synthase/2-amino-3-ketobutyrate coenzyme A ligase from Thermus thermophilus (strain ATCC 27634 / DSM 579 / HB8).